A 437-amino-acid chain; its full sequence is MSEVLPLITRRGDRIAFVSGLRTPFARQATAYHGVPALELGKLVTSELLVRTGIDPELIELLVFGQVVQMPEAPNIAREIVLGTGMSVHTDAYSVSRACATSFQAVANVAESIMAGTVEVGIAGGADSSSVLPIGVSKALARTLVDMNKARTLGQKLKLLSGLRPKDLLPVAPAVAEYSTGLRMGDTAEQMAKTYGITREEQDELAHRSHKLAAQAWESGVLRDEVMTAYVPPYEKALSEDNNVRHDSALEQYSRLRPAFDRRHGTVTAANSTPLTDGAAAVLMMSESRAKSLGLTPLGYLRSYAFSAIGVQRDMLLGPAYASPLALARAGVKLADLTLIDMHEAFAAQTLANLKLFASDEFARHQLGRNAALGEVDRAKFNVLGGSIAYGHPFAATGARMITQTLNELRRRGGGLGLTTACAAGGLGAAMVLEVTP.

Cys99 functions as the Acyl-thioester intermediate in the catalytic mechanism. Residues His392 and Cys422 each act as proton acceptor in the active site.

The protein belongs to the thiolase-like superfamily. Thiolase family. In terms of assembly, heterotetramer of two alpha chains (FadJ) and two beta chains (FadI).

The protein localises to the cytoplasm. The catalysed reaction is an acyl-CoA + acetyl-CoA = a 3-oxoacyl-CoA + CoA. It functions in the pathway lipid metabolism; fatty acid beta-oxidation. Catalyzes the final step of fatty acid oxidation in which acetyl-CoA is released and the CoA ester of a fatty acid two carbons shorter is formed. This Pectobacterium carotovorum subsp. carotovorum (strain PC1) protein is 3-ketoacyl-CoA thiolase.